We begin with the raw amino-acid sequence, 1414 residues long: Phenyloxazoline synthase MbtB (1414 aa).

A Carrier 1 domain is found at 5–78; that stretch reads TACSEIIRAE…AWSQLVSAGT (74 aa). At S39 the chain carries O-(pantetheine 4'-phosphoryl)serine. The tract at residues 96–394 is condensation/cyclization; it reads EGEPFPLAPM…SSLLLDVDLT (299 aa). The interval 579 to 975 is adenylation; sequence SYAQLRDQAS…RLPGVHAAAA (397 aa). Residues 1057-1135 form the Carrier 2 domain; that stretch reads APRTVLQRAL…ALAQLLTGRE (79 aa). S1094 carries the post-translational modification O-(pantetheine 4'-phosphoryl)serine. Residues 1188–1413 are thioesterase; that stretch reads GAVLVFPHAG…AVARMVSADV (226 aa).

It belongs to the ATP-dependent AMP-binding enzyme family. MbtB subfamily. Requires pantetheine 4'-phosphate as cofactor. Post-translationally, 4'-phosphopantetheine is transferred from CoA to a specific serine in each of the two carrier protein domains, leading to their activation from apo to holo forms.

It functions in the pathway siderophore biosynthesis; mycobactin biosynthesis. Functionally, involved in the initial steps of the mycobactin biosynthetic pathway. Putatively couples activated salicylic acid with serine or threonine and cyclizes this precursor to the hydroxyphenyloxazoline ring system present in this class of siderophores. Essential for growth in macrophages. In Mycobacterium tuberculosis (strain ATCC 25618 / H37Rv), this protein is Phenyloxazoline synthase MbtB (mbtB).